The primary structure comprises 71 residues: MKQGIHPNYREVNVTCSCGNKFVTKSAMEKENFNIEVCSLCHPFYTGTQKIVDTTGRVDKFNNKFGNLFKR.

C16, C18, C38, and C41 together coordinate Zn(2+).

The protein belongs to the bacterial ribosomal protein bL31 family. Type A subfamily. Part of the 50S ribosomal subunit. Requires Zn(2+) as cofactor.

Binds the 23S rRNA. The sequence is that of Large ribosomal subunit protein bL31 from Neisseria gonorrhoeae (strain ATCC 700825 / FA 1090).